Reading from the N-terminus, the 433-residue chain is ATP-sensitive inward rectifier potassium channel 12 (433 aa).

Residues Met1–Asp77 are Cytoplasmic-facing. Cys75 carries the post-translational modification S-nitrosocysteine. A helical membrane pass occupies residues Ile78–Val104. The a 1,2-diacyl-sn-glycero-3-phospho-(1D-myo-inositol-4,5-bisphosphate) site is built by Arg79 and Arg81. Residues Ile105–Gly129 lie on the Extracellular side of the membrane. Cys123 and Cys155 are disulfide-bonded. The segment at residues Phe130–Tyr146 is an intramembrane region (helical; Pore-forming). Positions 143, 144, 145, and 146 each coordinate K(+). A Selectivity filter motif is present at residues Thr143–Leu148. Residues Gly147–Cys155 lie on the Extracellular side of the membrane. A helical membrane pass occupies residues Pro156–Lys183. Positions 183 and 188 each coordinate a 1,2-diacyl-sn-glycero-3-phospho-(1D-myo-inositol-4,5-bisphosphate). The Cytoplasmic segment spans residues Met184–Ile433. The interval Asp387 to Ile433 is disordered. The span at Gln396–Arg414 shows a compositional bias: basic and acidic residues. Positions Ser431–Ile433 match the PDZ-binding motif.

This sequence belongs to the inward rectifier-type potassium channel (TC 1.A.2.1) family. KCNJ12 subfamily. As to quaternary structure, homotetramer. Forms heteromer with KCNJ4. Can form heteromeric channels with Kir2.6/KCNJ18. Association, via its PDZ-recognition domain, with LIN7A, LIN7B, LIN7C, DLG1, CASK and APBA1 plays a key role in its localization and trafficking.

The protein resides in the membrane. Its subcellular location is the cell membrane. It localises to the sarcolemma. The protein localises to the T-tubule. The enzyme catalyses K(+)(in) = K(+)(out). Its activity is regulated as follows. Activated by phosphatidylinositol 4,5-biphosphate (PtdIns(4,5)P2). PtdIns(4,5)P2 binding to the cytoplasmic side of the channel triggers a conformation change leading to channel opening. Inhibited by Ba(2+). Functionally, inward rectifying potassium channel that probably participates in controlling the resting membrane potential in electrically excitable cells. Probably participates in establishing action potential waveform and excitability of neuronal and muscle tissues. Inward rectifier potassium channels are characterized by a greater tendency to allow potassium to flow into the cell rather than out of it. Their voltage dependence is regulated by the concentration of extracellular potassium; as external potassium is raised, the voltage range of the channel opening shifts to more positive voltages. The inward rectification is mainly due to the blockage of outward current by internal magnesium. In Homo sapiens (Human), this protein is ATP-sensitive inward rectifier potassium channel 12 (KCNJ12).